Consider the following 78-residue polypeptide: Putative DPH3 homolog B (78 aa).

A DPH-type MB domain is found at 4–60 (FHDEVEIEDFQYDEDSETYFCPCPCGDNFSITKEELENGEGVAMCPGCSLIIKVIYD). Zn(2+) contacts are provided by cysteine 26, cysteine 28, cysteine 48, and cysteine 51.

Belongs to the DPH3 family.

The protein is Putative DPH3 homolog B (DPH3P1) of Homo sapiens (Human).